The primary structure comprises 692 residues: Acyl-coenzyme A oxidase 2, peroxisomal (692 aa).

The transit peptide at 1-49 (MESRREKNPMTEEESDGLIAARRIQRLSLHLSPSLTPSPSLPLVQTETC) directs the protein to the peroxisome. FAD-binding residues include threonine 186, serine 192, glycine 225, arginine 365, glutamine 384, glycine 452, and threonine 473. The active-site Proton acceptor is glutamate 475. Aspartate 477 is a binding site for FAD.

The protein belongs to the acyl-CoA oxidase family. In terms of assembly, homodimer. Requires FAD as cofactor. As to expression, expressed mainly in flowers and young seedlings. Lower expression in roots, leaves and bracts.

The protein resides in the peroxisome. It catalyses the reaction a 2,3-saturated acyl-CoA + O2 = a (2E)-enoyl-CoA + H2O2. Its function is as follows. Catalyzes the desaturation of long-chain acyl-CoAs to 2-trans-enoyl-CoAs. Active on substrates longer than C14 and mostly with C18-CoA. Activity on long-chain mono-unsaturated substrates is double than with the corresponding saturated substrates. This Arabidopsis thaliana (Mouse-ear cress) protein is Acyl-coenzyme A oxidase 2, peroxisomal.